The primary structure comprises 83 residues: Apolipoprotein C-I, acidic form (83 aa).

A signal peptide spans 1 to 26 (MRLFLSLPVLVVVLSIVLEGPAPAQG).

Belongs to the apolipoprotein C1 family.

Its subcellular location is the secreted. The chain is Apolipoprotein C-I, acidic form (APOC1A) from Pan paniscus (Pygmy chimpanzee).